The sequence spans 245 residues: tRNA (guanine-N(7)-)-methyltransferase (245 aa).

Residues Glu71, Glu96, Asp123, and Asp146 each coordinate S-adenosyl-L-methionine. Residue Asp146 is part of the active site. Lys150 provides a ligand contact to substrate. The segment at 152-157 (KHNKRR) is interaction with RNA. Substrate is bound by residues Asp182 and 224-227 (TKFE).

Belongs to the class I-like SAM-binding methyltransferase superfamily. TrmB family.

It carries out the reaction guanosine(46) in tRNA + S-adenosyl-L-methionine = N(7)-methylguanosine(46) in tRNA + S-adenosyl-L-homocysteine. The protein operates within tRNA modification; N(7)-methylguanine-tRNA biosynthesis. Its function is as follows. Catalyzes the formation of N(7)-methylguanine at position 46 (m7G46) in tRNA. This is tRNA (guanine-N(7)-)-methyltransferase from Albidiferax ferrireducens (strain ATCC BAA-621 / DSM 15236 / T118) (Rhodoferax ferrireducens).